The chain runs to 163 residues: Small ribosomal subunit protein uS5 (163 aa).

The 64-residue stretch at L8–V71 folds into the S5 DRBM domain.

The protein belongs to the universal ribosomal protein uS5 family. As to quaternary structure, part of the 30S ribosomal subunit. Contacts proteins S4 and S8.

Its function is as follows. With S4 and S12 plays an important role in translational accuracy. In terms of biological role, located at the back of the 30S subunit body where it stabilizes the conformation of the head with respect to the body. In Maridesulfovibrio salexigens (strain ATCC 14822 / DSM 2638 / NCIMB 8403 / VKM B-1763) (Desulfovibrio salexigens), this protein is Small ribosomal subunit protein uS5.